The chain runs to 816 residues: Neuroligin-4, X-linked (816 aa).

Positions 1–41 are cleaved as a signal peptide; it reads MSRPQGLLWLPLLFTPVCVMLNSNVLLWLTALAIKFTLIDS. Residues 42 to 676 are Extracellular-facing; that stretch reads QAQYPVVNTN…TKRDYSTELS (635 aa). Asparagine 102 is a glycosylation site (N-linked (GlcNAc...) asparagine). Intrachain disulfides connect cysteine 110/cysteine 146 and cysteine 306/cysteine 317. Residues 359–364 are interaction with NRXN1; sequence QGEFLN. Cysteine 476 and cysteine 510 are joined by a disulfide. The N-linked (GlcNAc...) asparagine glycan is linked to asparagine 511. The interval 636 to 659 is disordered; sequence TKRPAITPANNPKHSKDPHKTGPE. The segment covering 649–658 has biased composition (basic and acidic residues); it reads HSKDPHKTGP. A helical membrane pass occupies residues 677–697; the sequence is VTIAVGASLLFLNILAFAALY. Over 698 to 816 the chain is Cytoplasmic; sequence YKKDKRRHET…LPHGHSTTRV (119 aa). Serine 712 bears the Phosphoserine mark.

It belongs to the type-B carboxylesterase/lipase family. Homodimer. Interacts with NRXN1 in a calcium-dependent manner. Interaction with neurexins is mediated by heparan sulfate glycan modification on neurexin. Interacts through its C-terminus with DLG4/PSD-95 third PDZ domain. Expressed at highest levels in heart. Expressed at lower levels in liver, skeletal muscle and pancreas and at very low levels in brain.

The protein localises to the cell membrane. Its subcellular location is the postsynaptic density membrane. Its function is as follows. Cell surface protein involved in cell-cell-interactions via its interactions with neurexin family members. In Homo sapiens (Human), this protein is Neuroligin-4, X-linked (NLGN4X).